We begin with the raw amino-acid sequence, 200 residues long: Nucleoside triphosphate pyrophosphatase (200 aa).

Residue D79 is the Proton acceptor of the active site.

Belongs to the Maf family. A divalent metal cation serves as cofactor.

Its subcellular location is the cytoplasm. The enzyme catalyses a ribonucleoside 5'-triphosphate + H2O = a ribonucleoside 5'-phosphate + diphosphate + H(+). It carries out the reaction a 2'-deoxyribonucleoside 5'-triphosphate + H2O = a 2'-deoxyribonucleoside 5'-phosphate + diphosphate + H(+). Functionally, nucleoside triphosphate pyrophosphatase. May have a dual role in cell division arrest and in preventing the incorporation of modified nucleotides into cellular nucleic acids. The protein is Nucleoside triphosphate pyrophosphatase of Legionella pneumophila (strain Paris).